Here is a 151-residue protein sequence, read N- to C-terminus: MYPAHLLVLLAVCVSLLGAASIPARPLNLYQFGNMIQCANHGRRPTRHYMDYGCYCGKGGSGTPVDELDRCCQIHDDCYGEAEKLPACNYMMSGPYYNTYSYECNDGELTCKDNNDECKAFICNCDRTAAICFARTPYNDANWNINTKTRC.

Positions 1–27 (MYPAHLLVLLAVCVSLLGAASIPARPL) are cleaved as a signal peptide. 7 cysteine pairs are disulfide-bonded: Cys-38/Cys-104, Cys-54/Cys-151, Cys-56/Cys-72, Cys-71/Cys-132, Cys-78/Cys-125, Cys-88/Cys-118, and Cys-111/Cys-123. The Ca(2+) site is built by Tyr-55, Gly-57, and Gly-59. His-75 is a catalytic residue. Asp-76 provides a ligand contact to Ca(2+). Asp-126 is an active-site residue.

It belongs to the phospholipase A2 family. Group I subfamily. D49 sub-subfamily. Requires Ca(2+) as cofactor. As to expression, expressed by the venom gland.

Its subcellular location is the secreted. It carries out the reaction a 1,2-diacyl-sn-glycero-3-phosphocholine + H2O = a 1-acyl-sn-glycero-3-phosphocholine + a fatty acid + H(+). PLA2 catalyzes the calcium-dependent hydrolysis of the 2-acyl groups in 3-sn-phosphoglycerides. The chain is Acidic phospholipase A2 3 from Tropidechis carinatus (Australian rough-scaled snake).